The primary structure comprises 553 residues: Dihydroxy-acid dehydratase (553 aa).

D78 is a Mg(2+) binding site. Residue C119 coordinates [2Fe-2S] cluster. Mg(2+)-binding residues include D120 and K121. An N6-carboxylysine modification is found at K121. C193 contacts [2Fe-2S] cluster. E441 serves as a coordination point for Mg(2+). Catalysis depends on S467, which acts as the Proton acceptor.

This sequence belongs to the IlvD/Edd family. As to quaternary structure, homodimer. [2Fe-2S] cluster is required as a cofactor. It depends on Mg(2+) as a cofactor.

It carries out the reaction (2R)-2,3-dihydroxy-3-methylbutanoate = 3-methyl-2-oxobutanoate + H2O. The catalysed reaction is (2R,3R)-2,3-dihydroxy-3-methylpentanoate = (S)-3-methyl-2-oxopentanoate + H2O. Its pathway is amino-acid biosynthesis; L-isoleucine biosynthesis; L-isoleucine from 2-oxobutanoate: step 3/4. It participates in amino-acid biosynthesis; L-valine biosynthesis; L-valine from pyruvate: step 3/4. In terms of biological role, functions in the biosynthesis of branched-chain amino acids. Catalyzes the dehydration of (2R,3R)-2,3-dihydroxy-3-methylpentanoate (2,3-dihydroxy-3-methylvalerate) into 2-oxo-3-methylpentanoate (2-oxo-3-methylvalerate) and of (2R)-2,3-dihydroxy-3-methylbutanoate (2,3-dihydroxyisovalerate) into 2-oxo-3-methylbutanoate (2-oxoisovalerate), the penultimate precursor to L-isoleucine and L-valine, respectively. This chain is Dihydroxy-acid dehydratase, found in Geobacter sp. (strain M21).